A 227-amino-acid chain; its full sequence is Cytochrome c oxidase subunit 2 (227 aa).

At 1–14 (MAYPFQLGLQDATS) the chain is on the mitochondrial intermembrane side. Residues 15-45 (PIMEELLHFHDHTLMIVFLISSLVLYIISLM) form a helical membrane-spanning segment. The Mitochondrial matrix portion of the chain corresponds to 46-59 (LTTKLTHTSTMDAQ). Residues 60–87 (EVETVWTILPAIILILIALPSLRILYMM) traverse the membrane as a helical segment. Over 88 to 227 (DEINNPSLTV…YFETWSAVMV (140 aa)) the chain is Mitochondrial intermembrane. Residues H161, C196, E198, C200, H204, and M207 each coordinate Cu cation. Position 198 (E198) interacts with Mg(2+). Residue Y218 is modified to Phosphotyrosine.

Belongs to the cytochrome c oxidase subunit 2 family. In terms of assembly, component of the cytochrome c oxidase (complex IV, CIV), a multisubunit enzyme composed of 14 subunits. The complex is composed of a catalytic core of 3 subunits MT-CO1, MT-CO2 and MT-CO3, encoded in the mitochondrial DNA, and 11 supernumerary subunits COX4I, COX5A, COX5B, COX6A, COX6B, COX6C, COX7A, COX7B, COX7C, COX8 and NDUFA4, which are encoded in the nuclear genome. The complex exists as a monomer or a dimer and forms supercomplexes (SCs) in the inner mitochondrial membrane with NADH-ubiquinone oxidoreductase (complex I, CI) and ubiquinol-cytochrome c oxidoreductase (cytochrome b-c1 complex, complex III, CIII), resulting in different assemblies (supercomplex SCI(1)III(2)IV(1) and megacomplex MCI(2)III(2)IV(2)). Found in a complex with TMEM177, COA6, COX18, COX20, SCO1 and SCO2. Interacts with TMEM177 in a COX20-dependent manner. Interacts with COX20. Interacts with COX16. Requires Cu cation as cofactor.

It is found in the mitochondrion inner membrane. The enzyme catalyses 4 Fe(II)-[cytochrome c] + O2 + 8 H(+)(in) = 4 Fe(III)-[cytochrome c] + 2 H2O + 4 H(+)(out). Its function is as follows. Component of the cytochrome c oxidase, the last enzyme in the mitochondrial electron transport chain which drives oxidative phosphorylation. The respiratory chain contains 3 multisubunit complexes succinate dehydrogenase (complex II, CII), ubiquinol-cytochrome c oxidoreductase (cytochrome b-c1 complex, complex III, CIII) and cytochrome c oxidase (complex IV, CIV), that cooperate to transfer electrons derived from NADH and succinate to molecular oxygen, creating an electrochemical gradient over the inner membrane that drives transmembrane transport and the ATP synthase. Cytochrome c oxidase is the component of the respiratory chain that catalyzes the reduction of oxygen to water. Electrons originating from reduced cytochrome c in the intermembrane space (IMS) are transferred via the dinuclear copper A center (CU(A)) of subunit 2 and heme A of subunit 1 to the active site in subunit 1, a binuclear center (BNC) formed by heme A3 and copper B (CU(B)). The BNC reduces molecular oxygen to 2 water molecules using 4 electrons from cytochrome c in the IMS and 4 protons from the mitochondrial matrix. This is Cytochrome c oxidase subunit 2 (MT-CO2) from Lycalopex vetulus (Hoary fox).